The chain runs to 392 residues: Protein RecA (392 aa).

The tract at residues 1–21 (MALETKPAQDPATEIKHELDP) is disordered. 83 to 90 (GPESSGKT) provides a ligand contact to ATP. The disordered stretch occupies residues 372-392 (DAAKDTKATAAPAAKSSRAKA). Low complexity predominate over residues 379–392 (ATAAPAAKSSRAKA).

This sequence belongs to the RecA family.

It localises to the cytoplasm. Its function is as follows. Can catalyze the hydrolysis of ATP in the presence of single-stranded DNA, the ATP-dependent uptake of single-stranded DNA by duplex DNA, and the ATP-dependent hybridization of homologous single-stranded DNAs. It interacts with LexA causing its activation and leading to its autocatalytic cleavage. The chain is Protein RecA from Bifidobacterium breve.